Here is a 145-residue protein sequence, read N- to C-terminus: MLTAEEKAAVTAFWGKVHVDEVGGEALGRLLVVYPWTQRFFESFGDLSTADAVMNNPKVKAHGKKVLDSFSNGMKHLDDLKGTFAALSELHCDKLHVDPENFKLLGNVLVVVLARHFGKEFTPVLQADFQKVVAGVANALAHRYH.

The Globin domain occupies 1-145 (MLTAEEKAAV…VANALAHRYH (145 aa)). Phosphothreonine is present on T11. S43 is subject to Phosphoserine. K58 bears the N6-acetyllysine mark. H62 serves as a coordination point for heme b. K81 is subject to N6-acetyllysine. H91 is a binding site for heme b. C92 carries the post-translational modification S-nitrosocysteine.

The protein belongs to the globin family. Heterotetramer of two alpha chains and two beta chains. Red blood cells.

Involved in oxygen transport from the lung to the various peripheral tissues. The sequence is that of Hemoglobin subunit beta (HBB) from Bos gaurus frontalis (Domestic gayal).